A 41-amino-acid chain; its full sequence is MKIKNSLKSLKTRHRENRLVRRKGRVYIINKLNPRFKARQG.

The protein belongs to the bacterial ribosomal protein bL36 family.

The chain is Large ribosomal subunit protein bL36 from Sinorhizobium medicae (strain WSM419) (Ensifer medicae).